We begin with the raw amino-acid sequence, 331 residues long: Aspartate carbamoyltransferase catalytic subunit (331 aa).

Residues arginine 76 and threonine 77 each contribute to the carbamoyl phosphate site. Lysine 104 is a binding site for L-aspartate. Arginine 126, histidine 154, and glutamine 157 together coordinate carbamoyl phosphate. Arginine 187 and arginine 246 together coordinate L-aspartate. Carbamoyl phosphate-binding residues include glycine 287 and proline 288.

The protein belongs to the aspartate/ornithine carbamoyltransferase superfamily. ATCase family. Heterododecamer (2C3:3R2) of six catalytic PyrB chains organized as two trimers (C3), and six regulatory PyrI chains organized as three dimers (R2).

It carries out the reaction carbamoyl phosphate + L-aspartate = N-carbamoyl-L-aspartate + phosphate + H(+). Its pathway is pyrimidine metabolism; UMP biosynthesis via de novo pathway; (S)-dihydroorotate from bicarbonate: step 2/3. Its function is as follows. Catalyzes the condensation of carbamoyl phosphate and aspartate to form carbamoyl aspartate and inorganic phosphate, the committed step in the de novo pyrimidine nucleotide biosynthesis pathway. The protein is Aspartate carbamoyltransferase catalytic subunit of Dehalococcoides mccartyi (strain ATCC BAA-2100 / JCM 16839 / KCTC 5957 / BAV1).